We begin with the raw amino-acid sequence, 446 residues long: Tubulin beta chain (446 aa).

Residues Gln-11, Glu-69, Ser-138, Gly-142, Thr-143, Gly-144, Asn-204, and Asn-226 each coordinate GTP. Residue Glu-69 participates in Mg(2+) binding. A disordered region spans residues 423 to 446 (QQYQDATADEEEGEYEEEPAEEEQ). Positions 429 to 446 (TADEEEGEYEEEPAEEEQ) are enriched in acidic residues.

It belongs to the tubulin family. Dimer of alpha and beta chains. A typical microtubule is a hollow water-filled tube with an outer diameter of 25 nm and an inner diameter of 15 nM. Alpha-beta heterodimers associate head-to-tail to form protofilaments running lengthwise along the microtubule wall with the beta-tubulin subunit facing the microtubule plus end conferring a structural polarity. Microtubules usually have 13 protofilaments but different protofilament numbers can be found in some organisms and specialized cells. It depends on Mg(2+) as a cofactor.

It localises to the cytoplasm. The protein resides in the cytoskeleton. Its function is as follows. Tubulin is the major constituent of microtubules, a cylinder consisting of laterally associated linear protofilaments composed of alpha- and beta-tubulin heterodimers. Microtubules grow by the addition of GTP-tubulin dimers to the microtubule end, where a stabilizing cap forms. Below the cap, tubulin dimers are in GDP-bound state, owing to GTPase activity of alpha-tubulin. This is Tubulin beta chain from Pleurotus sajor-caju (Oyster mushroom).